A 195-amino-acid chain; its full sequence is HTH-type transcriptional regulator BetI (195 aa).

Positions S8–L68 constitute an HTH tetR-type domain. Positions T31–F50 form a DNA-binding region, H-T-H motif.

It functions in the pathway amine and polyamine biosynthesis; betaine biosynthesis via choline pathway [regulation]. In terms of biological role, repressor involved in the biosynthesis of the osmoprotectant glycine betaine. It represses transcription of the choline transporter BetT and the genes of BetAB involved in the synthesis of glycine betaine. In Escherichia coli O157:H7, this protein is HTH-type transcriptional regulator BetI.